The primary structure comprises 951 residues: Valine--tRNA ligase (951 aa).

The 'HIGH' region signature appears at 42–52; the sequence is PNVTGSLHMGH. The 'KMSKS' region signature appears at 554–558; that stretch reads KMSKS. Lys-557 serves as a coordination point for ATP. Residues 882 to 951 are a coiled coil; the sequence is LIDKDAELAR…EEQKATIAAL (70 aa).

The protein belongs to the class-I aminoacyl-tRNA synthetase family. ValS type 1 subfamily. Monomer.

The protein localises to the cytoplasm. The enzyme catalyses tRNA(Val) + L-valine + ATP = L-valyl-tRNA(Val) + AMP + diphosphate. In terms of biological role, catalyzes the attachment of valine to tRNA(Val). As ValRS can inadvertently accommodate and process structurally similar amino acids such as threonine, to avoid such errors, it has a 'posttransfer' editing activity that hydrolyzes mischarged Thr-tRNA(Val) in a tRNA-dependent manner. This Vibrio vulnificus (strain CMCP6) protein is Valine--tRNA ligase.